Reading from the N-terminus, the 1021-residue chain is Sodium/potassium-transporting ATPase subunit alpha-1 (1021 aa).

The propeptide occupies 1–5 (MGKGG). Positions 1–11 (MGKGGGRDKYE) are enriched in basic and acidic residues. The tract at residues 1–37 (MGKGGGRDKYEPAAISEHGNKKKAKKERDMDELKKEV) is disordered. The Cytoplasmic segment spans residues 6–85 (GRDKYEPAAI…NALTPPPTTP (80 aa)). Lysine 9 is modified (N6-acetyllysine). Residue tyrosine 10 is modified to Phosphotyrosine. Position 16 is a phosphoserine; by PKC (serine 16). At lysine 21 the chain carries N6-acetyllysine. Basic and acidic residues predominate over residues 26–37 (KERDMDELKKEV). Phosphoserine is present on residues serine 38 and serine 45. Residues 80–82 (PPP) are phosphoinositide-3 kinase binding. Residues 86–106 (EWVKFCRQLFGGFSMLLWIGA) traverse the membrane as a helical segment. At 107–129 (ILCFLAYGIQAATEEEPQNDNLY) the chain is on the extracellular side. A helical transmembrane segment spans residues 130–150 (LGVVLSAVVIITGCFSYYQEA). Topologically, residues 151-286 (KSSKIMESFK…GGQTPIAAEI (136 aa)) are cytoplasmic. The disordered stretch occupies residues 214 to 233 (SSLTGESEPQTRSPDFTNEN). Serine 226 bears the Phosphoserine mark. Tyrosine 258 carries the post-translational modification Phosphotyrosine. Residues 287 to 306 (EHFIHIITGVAVFLGVTFFI) traverse the membrane as a helical segment. The Extracellular segment spans residues 307–318 (LSLILEYTWLEA). Residues 319 to 336 (VIFLIGIIVANVPEGLLA) traverse the membrane as a helical segment. The Cytoplasmic portion of the chain corresponds to 337 to 770 (TVTVCLTLTA…EEGRLIFDNL (434 aa)). Aspartate 374 functions as the 4-aspartylphosphate intermediate in the catalytic mechanism. Phosphoserine is present on residues serine 450 and serine 482. Residue lysine 485 coordinates ATP. Tyrosine 540 carries the phosphotyrosine modification. Residues 594-715 (RAAVPDAVGK…QGAIVAVTGD (122 aa)) form a mediates interaction with SCN7A region. Lysine 659 is subject to N6-succinyllysine. Serine 666 is modified (phosphoserine). Residues aspartate 715 and aspartate 719 each coordinate Mg(2+). A helical transmembrane segment spans residues 771–790 (KKSIAYTLTSNIPEITPFLI). Over 791 to 800 (FIIANIPLPL) the chain is Extracellular. The chain crosses the membrane as a helical span at residues 801 to 821 (GTVTILCIDLGTDMVPAISLA). The Cytoplasmic segment spans residues 822–841 (YEQAESDIMKRQPRNPQTDK). A helical membrane pass occupies residues 842–864 (LVNERLISMAYGQIGMIQALGGF). The Extracellular segment spans residues 865–916 (FTYFVILAENGFLPIHLLGLRVDWDDRWVNDVEDSYGQQWTYEQRKIVEFTC). The helical transmembrane segment at 917–936 (HTAFFVSIVVVQWADLVICK) threads the bilayer. The Cytoplasmic portion of the chain corresponds to 937 to 949 (TRRNSVFQQGMKN). A Phosphoserine; by PKA modification is found at serine 941. The helical transmembrane segment at 950-968 (KILIFGLFEETALAAFLSY) threads the bilayer. The Extracellular portion of the chain corresponds to 969–983 (CPGMGVALRMYPLKP). Residues 984–1004 (TWWFCAFPYSLLIFVYDEVRK) form a helical membrane-spanning segment. The Cytoplasmic portion of the chain corresponds to 1005-1021 (LIIRRRPGGWVEKETYY).

Belongs to the cation transport ATPase (P-type) (TC 3.A.3) family. Type IIC subfamily. As to quaternary structure, the sodium/potassium-transporting ATPase is composed of a catalytic alpha subunit, an auxiliary non-catalytic beta subunit and an additional regulatory subunit. Interacts with regulatory subunit FXYD1. Interacts with regulatory subunit FXYD3. Interacts with SIK1. Interacts with SLC35G1 and STIM1. Interacts with CLN3; this interaction regulates the sodium/potassium-transporting ATPase complex localization at the plasma membrane. Interacts with SCN7A; activates ATP1A1 P-type sodium:potassium-exchanging transporter activity which indirectly signals to nearby neurons to regulate sodium homeostasis. Post-translationally, phosphorylation on Tyr-10 modulates pumping activity. Phosphorylation of Ser-941 by PKA modulates the response of ATP1A1 to PKC. Dephosphorylation by protein phosphatase 2A (PP2A) following increases in intracellular sodium, leading to increase catalytic activity.

The protein resides in the cell membrane. It localises to the basolateral cell membrane. Its subcellular location is the sarcolemma. It is found in the cell projection. The protein localises to the axon. The protein resides in the melanosome. It catalyses the reaction K(+)(out) + Na(+)(in) + ATP + H2O = K(+)(in) + Na(+)(out) + ADP + phosphate + H(+). Its function is as follows. This is the catalytic component of the active enzyme, which catalyzes the hydrolysis of ATP coupled with the exchange of sodium and potassium ions across the plasma membrane. This action creates the electrochemical gradient of sodium and potassium ions, providing the energy for active transport of various nutrients. Could also be part of an osmosensory signaling pathway that senses body-fluid sodium levels and controls salt intake behavior as well as voluntary water intake to regulate sodium homeostasis. The polypeptide is Sodium/potassium-transporting ATPase subunit alpha-1 (ATP1A1) (Equus caballus (Horse)).